Reading from the N-terminus, the 184-residue chain is ATP synthase subunit b, chloroplastic (184 aa).

A helical membrane pass occupies residues F27 to L49.

Belongs to the ATPase B chain family. As to quaternary structure, F-type ATPases have 2 components, F(1) - the catalytic core - and F(0) - the membrane proton channel. F(1) has five subunits: alpha(3), beta(3), gamma(1), delta(1), epsilon(1). F(0) has four main subunits: a(1), b(1), b'(1) and c(10-14). The alpha and beta chains form an alternating ring which encloses part of the gamma chain. F(1) is attached to F(0) by a central stalk formed by the gamma and epsilon chains, while a peripheral stalk is formed by the delta, b and b' chains.

The protein resides in the plastid. It is found in the chloroplast thylakoid membrane. Its function is as follows. F(1)F(0) ATP synthase produces ATP from ADP in the presence of a proton or sodium gradient. F-type ATPases consist of two structural domains, F(1) containing the extramembraneous catalytic core and F(0) containing the membrane proton channel, linked together by a central stalk and a peripheral stalk. During catalysis, ATP synthesis in the catalytic domain of F(1) is coupled via a rotary mechanism of the central stalk subunits to proton translocation. In terms of biological role, component of the F(0) channel, it forms part of the peripheral stalk, linking F(1) to F(0). The sequence is that of ATP synthase subunit b, chloroplastic from Ipomoea purpurea (Common morning glory).